The primary structure comprises 47 residues: Gas vesicle protein A (47 aa).

Belongs to the gas vesicle GvpA family. The gas vesicle shell is 2 nm thick and consists of a single layer of this protein. It forms helical ribs nearly perpendicular to the long axis of the vesicle.

The protein localises to the gas vesicle shell. In terms of biological role, gas vesicles are hollow, gas filled proteinaceous nanostructures found in some microorganisms. During planktonic growth they allow positioning of the organism at a favorable depth for light or nutrient acquisition. GvpA forms the protein shell. This is Gas vesicle protein A from Dactylococcopsis salina (Myxobaktron salinum).